We begin with the raw amino-acid sequence, 247 residues long: Small ribosomal subunit protein uS2 (247 aa).

Belongs to the universal ribosomal protein uS2 family.

This chain is Small ribosomal subunit protein uS2, found in Pseudomonas syringae pv. syringae (strain B728a).